We begin with the raw amino-acid sequence, 178 residues long: Large ribosomal subunit protein uL6 (178 aa).

The protein belongs to the universal ribosomal protein uL6 family. Part of the 50S ribosomal subunit.

Functionally, this protein binds to the 23S rRNA, and is important in its secondary structure. It is located near the subunit interface in the base of the L7/L12 stalk, and near the tRNA binding site of the peptidyltransferase center. The polypeptide is Large ribosomal subunit protein uL6 (Thermobifida fusca (strain YX)).